Here is a 130-residue protein sequence, read N- to C-terminus: Small ribosomal subunit protein uS8 (130 aa).

Belongs to the universal ribosomal protein uS8 family. In terms of assembly, part of the 30S ribosomal subunit. Contacts proteins S5 and S12.

In terms of biological role, one of the primary rRNA binding proteins, it binds directly to 16S rRNA central domain where it helps coordinate assembly of the platform of the 30S subunit. The protein is Small ribosomal subunit protein uS8 of Vibrio atlanticus (strain LGP32) (Vibrio splendidus (strain Mel32)).